We begin with the raw amino-acid sequence, 89 residues long: Small ribosomal subunit protein uS15 (89 aa).

Belongs to the universal ribosomal protein uS15 family. In terms of assembly, part of the 30S ribosomal subunit. Forms a bridge to the 50S subunit in the 70S ribosome, contacting the 23S rRNA.

Its function is as follows. One of the primary rRNA binding proteins, it binds directly to 16S rRNA where it helps nucleate assembly of the platform of the 30S subunit by binding and bridging several RNA helices of the 16S rRNA. In terms of biological role, forms an intersubunit bridge (bridge B4) with the 23S rRNA of the 50S subunit in the ribosome. The polypeptide is Small ribosomal subunit protein uS15 (Bartonella quintana (strain Toulouse) (Rochalimaea quintana)).